A 471-amino-acid chain; its full sequence is Anthocyanidin 3-O-glucosyltransferase (471 aa).

His24 functions as the Proton acceptor in the catalytic mechanism. His24 is a binding site for an anthocyanidin. Asp130 acts as the Charge relay in catalysis. Thr152 provides a ligand contact to UDP-alpha-D-glucose. Residue His161 participates in an anthocyanidin binding. Residues Ala352, Gln354, His369, Trp372, Ser374, and Glu377 each contribute to the UDP-alpha-D-glucose site. Gly392 provides a ligand contact to an anthocyanidin. 2 residues coordinate UDP-alpha-D-glucose: Asp393 and Gln394.

It belongs to the UDP-glycosyltransferase family.

It catalyses the reaction an anthocyanidin + UDP-alpha-D-glucose + H(+) = an anthocyanidin 3-O-beta-D-glucoside + UDP. The protein operates within pigment biosynthesis; anthocyanin biosynthesis. In terms of biological role, in the presence of other necessary color factors, this glycosylation reaction allows the accumulation of anthocyanin pigments. This chain is Anthocyanidin 3-O-glucosyltransferase (BZ1), found in Zea mays (Maize).